Here is a 241-residue protein sequence, read N- to C-terminus: Chlorophyll a-b binding protein 6, chloroplastic (241 aa).

The N-terminal 35 residues, 1–35 (MASNSLMSCGIAAVYPSLLSSSKSKFVSAGVPLPN), are a transit peptide targeting the chloroplast. Trp-48 provides a ligand contact to chlorophyll b. 3 residues coordinate chlorophyll a: Phe-68, Glu-87, and His-90. Chlorophyll b is bound at residue Arg-92. A helical transmembrane segment spans residues 93 to 113 (WAMLAVPGILVPEALGYGNWV). Residue Leu-129 participates in chlorophyll a binding. Residues 132 to 152 (PVPWGTLPTILAIEFLAIAFV) form a helical membrane-spanning segment. Residues Val-133, Glu-153, and Arg-156 each contribute to the chlorophyll b site. Chlorophyll a is bound by residues Lys-190, Glu-191, Asn-194, Arg-196, Gln-208, and His-224. The chain crosses the membrane as a helical span at residues 197 to 217 (LALLAFVGFCVQQSAYPGTGP).

Belongs to the light-harvesting chlorophyll a/b-binding (LHC) protein family. The LHC complex consists of chlorophyll a-b binding proteins. Red-emitting heterodimer with LHCA4. Interacts with LHCA5. Binds at least 14 chlorophylls (8 Chl-a and 6 Chl-b) and carotenoids such as lutein and neoxanthin. serves as cofactor. In terms of processing, photoregulated by reversible phosphorylation of its threonine residues.

The protein resides in the plastid. The protein localises to the chloroplast thylakoid membrane. The light-harvesting complex (LHC) functions as a light receptor, it captures and delivers excitation energy to photosystems with which it is closely associated. In Arabidopsis thaliana (Mouse-ear cress), this protein is Chlorophyll a-b binding protein 6, chloroplastic.